The chain runs to 434 residues: Mothers against decapentaplegic homolog 9 (434 aa).

Positions 16–140 (PAVKRLLGWK…YRRVETPVLP (125 aa)) constitute an MH1 domain. Zn(2+)-binding residues include Cys68, Cys113, Cys125, and His130. Positions 171–222 (MPHNATYPDSFQQSLGPAPPSSPGHVFPQSPCPTSYPQSPGSPSESDSPYQH) are disordered. Residues 202-221 (CPTSYPQSPGSPSESDSPYQ) are compositionally biased toward polar residues. One can recognise an MH2 domain in the interval 236-434 (WCSVAYYELN…SPHNPISSVS (199 aa)).

It belongs to the dwarfin/SMAD family. Interaction with the co-SMAD SMAD4. Interacts with PEBP2-alpha subunit. Interacts with RANBP3L. Post-translationally, phosphorylated on serine by BMP (bone morphogenetic proteins) type 1 receptor kinase. Phosphorylated by activin type I receptor-like kinase-2 (ALK-2).

It is found in the cytoplasm. It localises to the nucleus. In terms of biological role, transcriptional modulator activated by BMP (bone morphogenetic proteins) type 1 receptor kinase. SMAD9 is a receptor-regulated SMAD (R-SMAD). Has been shown to be activated by activin type I receptor-like kinase-2 (ALK-2) which stimulates heteromerization between SMAD9 and SMAD4. ALK-2 binds TGF-beta, activin and BMP. This chain is Mothers against decapentaplegic homolog 9 (Smad9), found in Rattus norvegicus (Rat).